The chain runs to 269 residues: 5'-nucleotidase SurE (269 aa).

4 residues coordinate a divalent metal cation: Asp11, Asp12, Ser43, and Asn101.

It belongs to the SurE nucleotidase family. A divalent metal cation is required as a cofactor.

The protein resides in the cytoplasm. It catalyses the reaction a ribonucleoside 5'-phosphate + H2O = a ribonucleoside + phosphate. In terms of biological role, nucleotidase that shows phosphatase activity on nucleoside 5'-monophosphates. This is 5'-nucleotidase SurE from Synechococcus sp. (strain WH7803).